The chain runs to 491 residues: N-succinylglutamate 5-semialdehyde dehydrogenase (491 aa).

Gly-225 to Gly-230 provides a ligand contact to NAD(+). Active-site residues include Glu-248 and Cys-282.

The protein belongs to the aldehyde dehydrogenase family. AstD subfamily.

The enzyme catalyses N-succinyl-L-glutamate 5-semialdehyde + NAD(+) + H2O = N-succinyl-L-glutamate + NADH + 2 H(+). The protein operates within amino-acid degradation; L-arginine degradation via AST pathway; L-glutamate and succinate from L-arginine: step 4/5. Functionally, catalyzes the NAD-dependent reduction of succinylglutamate semialdehyde into succinylglutamate. This Marinobacter nauticus (strain ATCC 700491 / DSM 11845 / VT8) (Marinobacter aquaeolei) protein is N-succinylglutamate 5-semialdehyde dehydrogenase.